Reading from the N-terminus, the 161-residue chain is Alpha-crystallin A chain (161 aa).

A required for complex formation with BFSP1 and BFSP2 region spans residues 1-51; that stretch reads ALGPFYPSRXXXXXXXXXXXXXXXXXXXXXXXXXXXXQSLFRTVLDSGISE. Position 38 is a deamidated glutamine; partial (Q38). The 111-residue stretch at 40-150 folds into the sHSP domain; the sequence is LFRTVLDSGI…SHSERAIPVS (111 aa). K87 bears the N6-acetyllysine mark. H88 lines the Zn(2+) pocket. N89 is modified (deamidated asparagine; partial). Zn(2+) is bound by residues E90 and H95. The residue at position 110 (S110) is a Phosphoserine. Residue N111 is modified to Deamidated asparagine; partial. Residues C119 and C130 are joined by a disulfide bond. A Deamidated glutamine; partial modification is found at Q135. The interval 140–161 is disordered; sequence ASHSERAIPVSREEKPSSAPSS. Positions 141–155 are enriched in basic and acidic residues; sequence SHSERAIPVSREEKP. Residue H142 coordinates Zn(2+). Residue S150 is glycosylated (O-linked (GlcNAc) serine).

It belongs to the small heat shock protein (HSP20) family. Heteromer composed of three CRYAA and one CRYAB subunits. Inter-subunit bridging via zinc ions enhances stability, which is crucial as there is no protein turn over in the lens. Can also form homodimers and homotetramers (dimers of dimers) which serve as the building blocks of homooligomers. Within homooligomers, the zinc-binding motif is created from residues of 3 different molecules. His-88 and Glu-90 from one molecule are ligands of the zinc ion, and His-95 and His-142 residues from additional molecules complete the site with tetrahedral coordination geometry. Part of a complex required for lens intermediate filament formation composed of BFSP1, BFSP2 and CRYAA. Undergoes age-dependent proteolytical cleavage at the C-terminus.

It is found in the cytoplasm. The protein localises to the nucleus. Functionally, contributes to the transparency and refractive index of the lens. In its oxidized form (absence of intramolecular disulfide bond), acts as a chaperone, preventing aggregation of various proteins under a wide range of stress conditions. Required for the correct formation of lens intermediate filaments as part of a complex composed of BFSP1, BFSP2 and CRYAA. This Galegeeska rufescens (East African rufous sengi) protein is Alpha-crystallin A chain (CRYAA).